The primary structure comprises 326 residues: GTP 3',8-cyclase (326 aa).

Residues 6 to 220 enclose the Radical SAM core domain; the sequence is SFGRRINYLR…DRISASYELE (215 aa). R15 provides a ligand contact to GTP. Residues C22 and C26 each contribute to the [4Fe-4S] cluster site. Y28 lines the S-adenosyl-L-methionine pocket. C29 is a [4Fe-4S] cluster binding site. GTP is bound at residue R65. G69 lines the S-adenosyl-L-methionine pocket. Residue T96 participates in GTP binding. S120 serves as a coordination point for S-adenosyl-L-methionine. K157 contributes to the GTP binding site. Residue M191 coordinates S-adenosyl-L-methionine. [4Fe-4S] cluster-binding residues include C254 and C257. 259-261 is a GTP binding site; sequence RVR. C271 provides a ligand contact to [4Fe-4S] cluster.

The protein belongs to the radical SAM superfamily. MoaA family. As to quaternary structure, monomer and homodimer. The cofactor is [4Fe-4S] cluster.

It carries out the reaction GTP + AH2 + S-adenosyl-L-methionine = (8S)-3',8-cyclo-7,8-dihydroguanosine 5'-triphosphate + 5'-deoxyadenosine + L-methionine + A + H(+). Its pathway is cofactor biosynthesis; molybdopterin biosynthesis. Catalyzes the cyclization of GTP to (8S)-3',8-cyclo-7,8-dihydroguanosine 5'-triphosphate. This is GTP 3',8-cyclase from Geobacter sulfurreducens (strain ATCC 51573 / DSM 12127 / PCA).